Consider the following 214-residue polypeptide: Redox-sensing transcriptional repressor Rex (214 aa).

A DNA-binding region (H-T-H motif) is located at residues Lys-17–Phe-56. Gly-91–Gly-96 serves as a coordination point for NAD(+).

This sequence belongs to the transcriptional regulatory Rex family. Homodimer.

It is found in the cytoplasm. In terms of biological role, modulates transcription in response to changes in cellular NADH/NAD(+) redox state. The protein is Redox-sensing transcriptional repressor Rex of Clostridium acetobutylicum (strain ATCC 824 / DSM 792 / JCM 1419 / IAM 19013 / LMG 5710 / NBRC 13948 / NRRL B-527 / VKM B-1787 / 2291 / W).